We begin with the raw amino-acid sequence, 96 residues long: Mitochondrial import inner membrane translocase subunit Tim13-B (96 aa).

A Twin CX3C motif motif is present at residues 47–70 (CFRKCIGKPGGSLDNSEQKCVAMC). 2 disulfide bridges follow: Cys47/Cys70 and Cys51/Cys66.

This sequence belongs to the small Tim family. Heterohexamer; composed of 3 copies of TIMM8 (TIMM8A or TIMM8B) and 3 copies of TIMM13, named soluble 70 kDa complex. Associates with the TIM22 complex, whose core is composed of TIMM22.

The protein localises to the mitochondrion inner membrane. Functionally, mitochondrial intermembrane chaperone that participates in the import and insertion of some multi-pass transmembrane proteins into the mitochondrial inner membrane. Also required for the transfer of beta-barrel precursors from the TOM complex to the sorting and assembly machinery (SAM complex) of the outer membrane. Acts as a chaperone-like protein that protects the hydrophobic precursors from aggregation and guide them through the mitochondrial intermembrane space. The TIMM8-TIMM13 complex mediates the import of some proteins while the predominant TIMM9-TIMM10 70 kDa complex mediates the import of much more proteins. The chain is Mitochondrial import inner membrane translocase subunit Tim13-B (timm13-b) from Xenopus laevis (African clawed frog).